Reading from the N-terminus, the 175-residue chain is MDLNTINSMSYEQFLDTFGNIIERCPLVTAAIWSQQPFASVTELENRVFDFIESLPLAGKEGILRCHPDLAGRDLMRGTLTDESQNEQAQAGLTLLSAKEKETLGFLNLQYKAKFGFPFVICAKMSDKNKIMQELGSRLQNEQSEELQKGIAEVKKICHLRICDLFLNEKLPTKL.

The active-site Proton donor is His-67. Residues Pro-68, 84-88 (SQNEQ), and 119-123 (FVICA) contribute to the substrate site. Positions 173–175 (TKL) match the Microbody targeting signal motif.

Belongs to the OHCU decarboxylase family.

Its subcellular location is the peroxisome. The enzyme catalyses 5-hydroxy-2-oxo-4-ureido-2,5-dihydro-1H-imidazole-5-carboxylate + H(+) = (S)-allantoin + CO2. It functions in the pathway purine metabolism; urate degradation; (S)-allantoin from urate: step 3/3. Catalyzes the stereoselective decarboxylation of 2-oxo-4-hydroxy-4-carboxy-5-ureidoimidazoline (OHCU) to (S)-allantoin. The protein is 2-oxo-4-hydroxy-4-carboxy-5-ureidoimidazoline decarboxylase (urad) of Xenopus laevis (African clawed frog).